Here is a 514-residue protein sequence, read N- to C-terminus: Threonine synthase (514 aa).

Lysine 124 is modified (N6-(pyridoxal phosphate)lysine). Residues glycine 277, asparagine 278, phenylalanine 279, aspartate 281, and threonine 449 each contribute to the pyridoxal 5'-phosphate site. A Phosphoserine modification is found at serine 467.

It belongs to the threonine synthase family. It depends on pyridoxal 5'-phosphate as a cofactor.

The enzyme catalyses O-phospho-L-homoserine + H2O = L-threonine + phosphate. It participates in amino-acid biosynthesis; L-threonine biosynthesis; L-threonine from L-aspartate: step 5/5. In terms of biological role, catalyzes the gamma-elimination of phosphate from L-phosphohomoserine and the beta-addition of water to produce L-threonine. The polypeptide is Threonine synthase (THR4) (Saccharomyces cerevisiae (strain ATCC 204508 / S288c) (Baker's yeast)).